The sequence spans 303 residues: Sulfate adenylyltransferase subunit 2 (303 aa).

This sequence belongs to the PAPS reductase family. CysD subfamily. As to quaternary structure, heterodimer composed of CysD, the smaller subunit, and CysN.

The enzyme catalyses sulfate + ATP + H(+) = adenosine 5'-phosphosulfate + diphosphate. The protein operates within sulfur metabolism; hydrogen sulfide biosynthesis; sulfite from sulfate: step 1/3. With CysN forms the ATP sulfurylase (ATPS) that catalyzes the adenylation of sulfate producing adenosine 5'-phosphosulfate (APS) and diphosphate, the first enzymatic step in sulfur assimilation pathway. APS synthesis involves the formation of a high-energy phosphoric-sulfuric acid anhydride bond driven by GTP hydrolysis by CysN coupled to ATP hydrolysis by CysD. The polypeptide is Sulfate adenylyltransferase subunit 2 (Akkermansia muciniphila (strain ATCC BAA-835 / DSM 22959 / JCM 33894 / BCRC 81048 / CCUG 64013 / CIP 107961 / Muc)).